An 872-amino-acid polypeptide reads, in one-letter code: G-type lectin S-receptor-like serine/threonine-protein kinase At5g35370 (872 aa).

The N-terminal stretch at 1–26 (MKSTFLLLLLLLSLNLLFVFVSCASS) is a signal peptide. Over 27-443 (IEFVYPNFTA…NNNRGGSSFP (417 aa)) the chain is Extracellular. N-linked (GlcNAc...) asparagine glycosylation is found at Asn-33, Asn-148, and Asn-239. In terms of domain architecture, Bulb-type lectin spans 35 to 156 (TASNLRFVDS…LNVSLWESFD (122 aa)). One can recognise an EGF-like; atypical domain in the interval 283-322 (PMDSCQIPFVCGKLGLCNLDNASENQSCSCPDEMRMDAGK). 2 cysteine pairs are disulfide-bonded: Cys-287–Cys-299 and Cys-293–Cys-310. 5 N-linked (GlcNAc...) asparagine glycosylation sites follow: Asn-303, Asn-307, Asn-342, Asn-379, and Asn-389. In terms of domain architecture, PAN spans 338-423 (CEARNISYLE…HDLIGYVKLS (86 aa)). 2 disulfide bridges follow: Cys-372/Cys-394 and Cys-376/Cys-382. The helical transmembrane segment at 444 to 464 (VIALVLLPCSGFFLLIALGLL) threads the bilayer. Topologically, residues 465-872 (WWRRCAVMRY…IASQEVSGPR (408 aa)) are cytoplasmic. A Protein kinase domain is found at 515-814 (ENFKMQIGSG…GSIPLGNPRM (300 aa)). ATP is bound by residues 521 to 529 (IGSGGFGSV) and Lys-543. A caM-binding region spans residues 603–620 (GNGPVLEWQERFDIALGT). Residue Asp-639 is the Proton acceptor of the active site. Ser-656 bears the Phosphoserine mark. At Thr-673 the chain carries Phosphothreonine. Phosphoserine is present on residues Ser-716 and Ser-859. The interval 836–872 (QNGESETMVFHRRESSNSGGSRQSASYIASQEVSGPR) is disordered. Positions 851–861 (SNSGGSRQSAS) are enriched in low complexity. Residues 862 to 872 (YIASQEVSGPR) are compositionally biased toward polar residues.

This sequence belongs to the protein kinase superfamily. Ser/Thr protein kinase family.

It localises to the cell membrane. The enzyme catalyses L-seryl-[protein] + ATP = O-phospho-L-seryl-[protein] + ADP + H(+). It catalyses the reaction L-threonyl-[protein] + ATP = O-phospho-L-threonyl-[protein] + ADP + H(+). The polypeptide is G-type lectin S-receptor-like serine/threonine-protein kinase At5g35370 (Arabidopsis thaliana (Mouse-ear cress)).